The primary structure comprises 951 residues: Bromodomain-containing protein 8 (951 aa).

K85 carries the post-translational modification N6-acetyllysine. A coiled-coil region spans residues 97–171 (VRKLTAERVE…ATDAAYQARQ (75 aa)). A disordered region spans residues 161–273 (KATDAAYQAR…TPPPSPLLSE (113 aa)). The segment covering 204-226 (TPTTMEEATSGVTPGTLPSTPVT) has biased composition (polar residues). S456 and S460 each carry phosphoserine. The interval 520–547 (EENDDPQSLPGPWEHPIQQERDKPVPLP) is disordered. K542 participates in a covalent cross-link: Glycyl lysine isopeptide (Lys-Gly) (interchain with G-Cter in SUMO2). An N6-acetyllysine; alternate modification is found at K554. Residue K554 forms a Glycyl lysine isopeptide (Lys-Gly) (interchain with G-Cter in SUMO1); alternate linkage. K554 participates in a covalent cross-link: Glycyl lysine isopeptide (Lys-Gly) (interchain with G-Cter in SUMO2); alternate. K582 participates in a covalent cross-link: Glycyl lysine isopeptide (Lys-Gly) (interchain with G-Cter in SUMO2). A disordered region spans residues 584 to 745 (EPTEPEPGMS…PVSESDDGFS (162 aa)). Positions 610 to 622 (PELRSQDSDEEPR) are enriched in basic and acidic residues. Residue K648 forms a Glycyl lysine isopeptide (Lys-Gly) (interchain with G-Cter in SUMO2) linkage. Phosphoserine is present on S652. Over residues 673–688 (ETQHKFEMSDSLKEES) the composition is skewed to basic and acidic residues. K685 participates in a covalent cross-link: Glycyl lysine isopeptide (Lys-Gly) (interchain with G-Cter in SUMO2). S694, S710, and S714 each carry phosphoserine. The Bromo domain occupies 779-884 (IQAQKIWKKA…RDVLEQIQQF (106 aa)). Positions 900-922 (AKSLRGRDSTRKQDASEKDSVPM) are disordered. Residues 904–919 (RGRDSTRKQDASEKDS) show a composition bias toward basic and acidic residues.

As to quaternary structure, component of the NuA4 histone acetyltransferase complex which contains the catalytic subunit KAT5/TIP60 and the subunits EP400, TRRAP/PAF400, BRD8/SMAP, EPC1, DMAP1/DNMAP1, RUVBL1/TIP49, RUVBL2, ING3, actin, ACTL6A/BAF53A, MORF4L1/MRG15, MORF4L2/MRGX, MRGBP, YEATS4/GAS41, VPS72/YL1 and MEAF6. Component of a NuA4-related complex which contains EP400, TRRAP/PAF400, SRCAP, BRD8/SMAP, EPC1, DMAP1/DNMAP1, RUVBL1/TIP49, RUVBL2, actin, ACTL6A/BAF53A, VPS72 and YEATS4/GAS41. BRD8 isoform 2 interacts with RXRA/NR2B1 and THRB/ERBA2. Component of a SWR1-like complex.

The protein resides in the nucleus. Its function is as follows. May act as a coactivator during transcriptional activation by hormone-activated nuclear receptors (NR). Stimulates transcriptional activation by AR/DHTR, ESR1/NR3A1, RXRA/NR2B1 and THRB/ERBA2. Component of the NuA4 histone acetyltransferase (HAT) complex which is involved in transcriptional activation of select genes principally by acetylation of nucleosomal histones H4 and H2A. This modification may both alter nucleosome - DNA interactions and promote interaction of the modified histones with other proteins which positively regulate transcription. This complex may be required for the activation of transcriptional programs associated with oncogene and proto-oncogene mediated growth induction, tumor suppressor mediated growth arrest and replicative senescence, apoptosis, and DNA repair. NuA4 may also play a direct role in DNA repair when recruited to sites of DNA damage. Component of a SWR1-like complex that specifically mediates the removal of histone H2A.Z/H2AZ1 from the nucleosome. The protein is Bromodomain-containing protein 8 (Brd8) of Mus musculus (Mouse).